The sequence spans 337 residues: tRNA N6-adenosine threonylcarbamoyltransferase (337 aa).

The Fe cation site is built by His111 and His115. Substrate is bound by residues Leu134 to Gly138, Asp167, Gly180, and Asn272. Position 300 (Asp300) interacts with Fe cation.

The protein belongs to the KAE1 / TsaD family. The cofactor is Fe(2+).

The protein localises to the cytoplasm. The catalysed reaction is L-threonylcarbamoyladenylate + adenosine(37) in tRNA = N(6)-L-threonylcarbamoyladenosine(37) in tRNA + AMP + H(+). In terms of biological role, required for the formation of a threonylcarbamoyl group on adenosine at position 37 (t(6)A37) in tRNAs that read codons beginning with adenine. Is involved in the transfer of the threonylcarbamoyl moiety of threonylcarbamoyl-AMP (TC-AMP) to the N6 group of A37, together with TsaE and TsaB. TsaD likely plays a direct catalytic role in this reaction. This is tRNA N6-adenosine threonylcarbamoyltransferase from Salmonella arizonae (strain ATCC BAA-731 / CDC346-86 / RSK2980).